We begin with the raw amino-acid sequence, 375 residues long: Succinyl-diaminopimelate desuccinylase (375 aa).

His66 contacts Zn(2+). The active site involves Asp68. Asp99 is a Zn(2+) binding site. Glu133 serves as the catalytic Proton acceptor. Zn(2+) is bound by residues Glu134, Glu162, and His348.

This sequence belongs to the peptidase M20A family. DapE subfamily. As to quaternary structure, homodimer. Zn(2+) serves as cofactor. Requires Co(2+) as cofactor.

The enzyme catalyses N-succinyl-(2S,6S)-2,6-diaminopimelate + H2O = (2S,6S)-2,6-diaminopimelate + succinate. It functions in the pathway amino-acid biosynthesis; L-lysine biosynthesis via DAP pathway; LL-2,6-diaminopimelate from (S)-tetrahydrodipicolinate (succinylase route): step 3/3. Its function is as follows. Catalyzes the hydrolysis of N-succinyl-L,L-diaminopimelic acid (SDAP), forming succinate and LL-2,6-diaminopimelate (DAP), an intermediate involved in the bacterial biosynthesis of lysine and meso-diaminopimelic acid, an essential component of bacterial cell walls. This Buchnera aphidicola subsp. Acyrthosiphon pisum (strain APS) (Acyrthosiphon pisum symbiotic bacterium) protein is Succinyl-diaminopimelate desuccinylase.